The sequence spans 586 residues: Arginine--tRNA ligase (586 aa).

The short motif at 128–138 (ANPTGPLHVGH) is the 'HIGH' region element.

Belongs to the class-I aminoacyl-tRNA synthetase family. As to quaternary structure, monomer.

Its subcellular location is the cytoplasm. It carries out the reaction tRNA(Arg) + L-arginine + ATP = L-arginyl-tRNA(Arg) + AMP + diphosphate. The polypeptide is Arginine--tRNA ligase (Thioalkalivibrio sulfidiphilus (strain HL-EbGR7)).